Reading from the N-terminus, the 403-residue chain is MSAKRRLFTSESVTEGHPDKICDQISDAILDAILEKDPNARVACETSVTTGLVLVSGEITTSTYVDIPRIVRDTVREIGYTRAKYGFDADTCAVLTSIDEQSPDIAMGVDRALEAREGQMTDEEIEAIGAGDQGLMFGFACNETEELMPMPISLAHRLARRLAEVRKTDVLPYLRPDGKTQVTIEYDENGKPVRVDTIVVSAQHHPEITQEQIQRDIKEQVIKPVVPAELLDENTKYFINPTGRFVIGGPQGDAGLTGRKIIVDTYGGYARHGGGAFSGKDPTKVDRSAAYAARYVAKNIVAAGLADKCEVQLAYAIGVARPVSISIDTFGTGKVSEDILIEVVRNNFDLRPAGIIKMLDLRRPIYKQTAAYGHFGRTDIDLPWERTDKAALLKEQALALADK.

ATP is bound at residue His-17. Asp-19 is a Mg(2+) binding site. Residue Glu-45 coordinates K(+). Residues Glu-58 and Gln-101 each contribute to the L-methionine site. The flexible loop stretch occupies residues 101-111 (QSPDIAMGVDR). ATP contacts are provided by residues 177-179 (DGK), 244-245 (RF), Asp-253, 259-260 (RK), Ala-276, and Lys-280. Asp-253 lines the L-methionine pocket. Lys-284 is an L-methionine binding site.

Belongs to the AdoMet synthase family. Homotetramer; dimer of dimers. It depends on Mg(2+) as a cofactor. Requires K(+) as cofactor.

It is found in the cytoplasm. The enzyme catalyses L-methionine + ATP + H2O = S-adenosyl-L-methionine + phosphate + diphosphate. The protein operates within amino-acid biosynthesis; S-adenosyl-L-methionine biosynthesis; S-adenosyl-L-methionine from L-methionine: step 1/1. Functionally, catalyzes the formation of S-adenosylmethionine (AdoMet) from methionine and ATP. The overall synthetic reaction is composed of two sequential steps, AdoMet formation and the subsequent tripolyphosphate hydrolysis which occurs prior to release of AdoMet from the enzyme. The polypeptide is S-adenosylmethionine synthase (Geobacillus kaustophilus (strain HTA426)).